The sequence spans 456 residues: Bifunctional protein GlmU (456 aa).

Positions 1–231 (MERTCLAIIL…EEELTGCNTR (231 aa)) are pyrophosphorylase. Residues 10–13 (LAAG), Lys-24, Gln-77, and 82–83 (GT) contribute to the UDP-N-acetyl-alpha-D-glucosamine site. Asp-107 provides a ligand contact to Mg(2+). UDP-N-acetyl-alpha-D-glucosamine-binding residues include Gly-143, Glu-157, Asn-172, and Asn-229. Residue Asn-229 participates in Mg(2+) binding. The interval 232–252 (AELAYIERLWQQRRRHELMLA) is linker. The tract at residues 253–456 (GVSMVAPETV…LARKIAKAAE (204 aa)) is N-acetyltransferase. UDP-N-acetyl-alpha-D-glucosamine-binding residues include Arg-318 and Lys-336. Catalysis depends on His-348, which acts as the Proton acceptor. Residues Tyr-351 and Asn-362 each coordinate UDP-N-acetyl-alpha-D-glucosamine. Residues Ala-365, 371 to 372 (NY), Ser-390, Ser-408, and Arg-425 contribute to the acetyl-CoA site.

This sequence in the N-terminal section; belongs to the N-acetylglucosamine-1-phosphate uridyltransferase family. The protein in the C-terminal section; belongs to the transferase hexapeptide repeat family. As to quaternary structure, homotrimer. It depends on Mg(2+) as a cofactor.

The protein resides in the cytoplasm. The catalysed reaction is alpha-D-glucosamine 1-phosphate + acetyl-CoA = N-acetyl-alpha-D-glucosamine 1-phosphate + CoA + H(+). The enzyme catalyses N-acetyl-alpha-D-glucosamine 1-phosphate + UTP + H(+) = UDP-N-acetyl-alpha-D-glucosamine + diphosphate. It functions in the pathway nucleotide-sugar biosynthesis; UDP-N-acetyl-alpha-D-glucosamine biosynthesis; N-acetyl-alpha-D-glucosamine 1-phosphate from alpha-D-glucosamine 6-phosphate (route II): step 2/2. The protein operates within nucleotide-sugar biosynthesis; UDP-N-acetyl-alpha-D-glucosamine biosynthesis; UDP-N-acetyl-alpha-D-glucosamine from N-acetyl-alpha-D-glucosamine 1-phosphate: step 1/1. Its pathway is bacterial outer membrane biogenesis; LPS lipid A biosynthesis. In terms of biological role, catalyzes the last two sequential reactions in the de novo biosynthetic pathway for UDP-N-acetylglucosamine (UDP-GlcNAc). The C-terminal domain catalyzes the transfer of acetyl group from acetyl coenzyme A to glucosamine-1-phosphate (GlcN-1-P) to produce N-acetylglucosamine-1-phosphate (GlcNAc-1-P), which is converted into UDP-GlcNAc by the transfer of uridine 5-monophosphate (from uridine 5-triphosphate), a reaction catalyzed by the N-terminal domain. The chain is Bifunctional protein GlmU from Sinorhizobium medicae (strain WSM419) (Ensifer medicae).